Here is a 545-residue protein sequence, read N- to C-terminus: Endo-beta-N-acetylglucosaminidase (545 aa).

Positions 1–36 (MTFIKQMMPRYVASMTAGIVAAAMAATCAFAPVANA) are cleaved as a signal peptide. Positions 51-333 (RHFMVYYRAW…EDLRRIVPSN (283 aa)) constitute a GH18 domain. Glu184 serves as the catalytic Proton donor. Positions 486 to 511 (PVPTPDSTDQNGNRDKVTNHKVQGQP) are disordered. The helical transmembrane segment at 518–538 (GISTDIIVAVGVTLAIAGVAL) threads the bilayer.

It belongs to the glycosyl hydrolase 18 family.

Its subcellular location is the cell membrane. The catalysed reaction is an N(4)-(oligosaccharide-(1-&gt;3)-[oligosaccharide-(1-&gt;6)]-beta-D-Man-(1-&gt;4)-beta-D-GlcNAc-(1-&gt;4)-alpha-D-GlcNAc)-L-asparaginyl-[protein] + H2O = an oligosaccharide-(1-&gt;3)-[oligosaccharide-(1-&gt;6)]-beta-D-Man-(1-&gt;4)-D-GlcNAc + N(4)-(N-acetyl-beta-D-glucosaminyl)-L-asparaginyl-[protein]. In terms of biological role, endoglycosidase with broad specificity that cleaves the chitobiose core of high mannose and complex N-linked glycans. Is able to release N-glycans from diverse host glycoproteins such as human and bovine lactoferrin, immunoglobulins A and G, and ribonuclease B. Is active directly on human breast milk - a complex matrix of lipids, oligosaccharides, and proteins with disparate glycosylation types - successfully removing a significant proportion of the total amount of N-glycans. Does not recognize O-linked glycans or free human milk oligosaccharides (HMO). This Bifidobacterium longum subsp. infantis (strain ATCC 15697 / DSM 20088 / JCM 1222 / NCTC 11817 / S12) protein is Endo-beta-N-acetylglucosaminidase.